Reading from the N-terminus, the 147-residue chain is Truncated RecQ DNA helicase-like protein C212.06c (147 aa).

One can recognise a Helicase C-terminal domain in the interval 1–72 (MGVRLVVHYR…CVRSFLASEM (72 aa)). A disordered region spans residues 100–147 (ETPKPAIATHSRYNASFSSSPPPQPGSSSGMSAMNTNTTSTTPVSGKT). The segment covering 125-141 (GSSSGMSAMNTNTTSTT) has biased composition (low complexity).

The protein belongs to the helicase family. RecQ subfamily.

In terms of biological role, truncated ATP-dependent 3'-5' DNA helicase. In Schizosaccharomyces pombe (strain 972 / ATCC 24843) (Fission yeast), this protein is Truncated RecQ DNA helicase-like protein C212.06c.